We begin with the raw amino-acid sequence, 1556 residues long: Ras guanine nucleotide exchange factor G (1556 aa).

Disordered regions lie at residues 19 to 63 (IGNI…KNRG), 93 to 141 (LQLN…SSTT), 163 to 239 (SHVT…LSPS), and 254 to 296 (ATDS…NNNS). Composition is skewed to low complexity over residues 25-54 (NNNN…SGSN) and 96-141 (NDTD…SSTT). Acidic residues predominate over residues 170–186 (DDDDDDESSSSEEDFDS). The span at 196-216 (TSSTTATTTTTTTSVSPLTSS) shows a compositional bias: low complexity. Over residues 256-271 (DSDNQSLEPCNNKTIV) the composition is skewed to polar residues. The segment covering 279–295 (DNNNNHNNNNNNNNNNN) has biased composition (low complexity). Positions 307 to 353 (NKTFLDLDEKIYLKIFGYLFAEDLCSINRVSKHLCNIINNQQLWKDL) constitute an F-box 1 domain. The tract at residues 385–416 (NNNNNNNNNNNNNNNNSNISNNNNNINNSNGN) is disordered. Positions 679-726 (VFDISRVSDILLIKIFRNLDSIKDLSVCQRVSKRWNKAIAISSLWEQL) constitute an F-box 2 domain. Disordered regions lie at residues 762–815 (QPSP…NGLN) and 827–1101 (GSNL…ITNN). The segment covering 827–848 (GSNLSNGGNSGSSFSPFNPLSG) has biased composition (low complexity). Residues 849-866 (SNGGSSFGPFGSGGGGGS) are compositionally biased toward gly residues. Composition is skewed to low complexity over residues 867 to 880 (NSNI…LNSS) and 888 to 910 (FLAM…TIST). The segment covering 911–935 (NCTPTGGSTTNSPNFQSPMVSSSTV) has biased composition (polar residues). Low complexity-rich tracts occupy residues 943–957 (SPNL…ISLS) and 972–1053 (PDSS…IQPI). Positions 1059–1076 (VNNNGSQSDLSKISDLNA) are enriched in polar residues. Residues 1077 to 1101 (NPNTTTTTTTNTIESSSSSSSITNN) are compositionally biased toward low complexity. The N-terminal Ras-GEF domain occupies 1116–1244 (MINVQKLMNL…LIRSFSRKLS (129 aa)). The tract at residues 1254-1279 (IGITGGKSSRKGGGSGSGSGSGGGSG) is disordered. The segment covering 1264–1279 (KGGGSGSGSGSGGGSG) has biased composition (gly residues). The 232-residue stretch at 1317-1548 (PAEEIAKQLT…YRVSMQREPR (232 aa)) folds into the Ras-GEF domain.

Promotes the exchange of Ras-bound GDP by GTP. In Dictyostelium discoideum (Social amoeba), this protein is Ras guanine nucleotide exchange factor G (gefG).